A 194-amino-acid chain; its full sequence is High mobility group protein B4 (194 aa).

DNA-binding regions (HMG box) lie at residues proline 9–phenylalanine 79 and proline 93–arginine 161.

The protein belongs to the HMGB family.

Its subcellular location is the nucleus. It is found in the chromosome. The sequence is that of High mobility group protein B4 (HMGB4) from Bos taurus (Bovine).